The chain runs to 841 residues: MLGILNKVFDPTKRTLSRYEKKANEIDALKADIEKLSDEALKQKTIEFKERLEKGETVDDLLVEAFAVVREASRRVTGMFPFKVQLMGGVALHEGNIAEMKTGEGKTLTSTMPVYLNALSGKGVHVVTVNEYLASRDAEEMGKIFEFLGLTVGLNLNSLSKDEKREAYAADITYSTNNELGFDYLRDNMVLYKEQMVQRPLHFAVIDEVDSILIDEARTPLIISGQAAKSTKLYVQANAFVRTLKADQDYTYDVKTKGVQLTEEGMTKAEKAFGIENLFDVRHVALNHHIAQALKAHAAMHKDVDYVVEDGQVVIVDSFTGRLMKGRRYSDGLHQAIEAKEGLEIQNESMTLATITFQNYFRMYEKLAGMTGTAKTEEEEFRNIYNMQVVTIPTNKPIARDDRPDLIYRTMEGKFKAVAEDVAQRYMVGQPVLVGTVAVETSELISRLLKNKGIPHQVLNAKNHEREAQIIEDAGQKGAVTIATNMAGRGTDIKLGEGVKELGGLAVIGTERHESRRIDNQLRGRSGRQGDPGITQFYLSMEDELMKRFGAERTMAMLDRFGMDDSTPIQSKMVSRAVESSQKRVEGNNFDARKQLLQYDDVLRQQREVIYKQRFEVIDSDNLRSIVENMIKASLERAVASYTPKEDLPEEWNLDGLVELVNANFLDEGGVEKSDIFGKEPEEITELIYDRIKTKYDEKEERYGSEQMREFEKVIVLREVDTKWMDHIDAMDQLRQGIHLRAYAQTNPLREYQMEGFAMFENMIAAIEDDVAKFVMKAEIENNLEREEVIQGQTTAHQPKEGDEEKQAKKKPVRKAVDIGRNDPCYCGSGKKYKNCCGRTE.

Residues Q85, 103–107 (GEGKT), and D492 contribute to the ATP site. A disordered region spans residues 790–814 (IQGQTTAHQPKEGDEEKQAKKKPVR). The span at 798–807 (QPKEGDEEKQ) shows a compositional bias: basic and acidic residues. Zn(2+) contacts are provided by C825, C827, C836, and C837.

This sequence belongs to the SecA family. In terms of assembly, monomer and homodimer. Part of the essential Sec protein translocation apparatus which comprises SecA, SecYEG and auxiliary proteins SecDF. Other proteins may also be involved. It depends on Zn(2+) as a cofactor.

Its subcellular location is the cell membrane. The protein localises to the cytoplasm. The enzyme catalyses ATP + H2O + cellular proteinSide 1 = ADP + phosphate + cellular proteinSide 2.. Its function is as follows. Part of the Sec protein translocase complex. Interacts with the SecYEG preprotein conducting channel. Has a central role in coupling the hydrolysis of ATP to the transfer of proteins into and across the cell membrane, serving as an ATP-driven molecular motor driving the stepwise translocation of polypeptide chains across the membrane. The polypeptide is Protein translocase subunit SecA (Bacillus licheniformis (strain ATCC 14580 / DSM 13 / JCM 2505 / CCUG 7422 / NBRC 12200 / NCIMB 9375 / NCTC 10341 / NRRL NRS-1264 / Gibson 46)).